The chain runs to 301 residues: Protease HtpX (301 aa).

The next 2 membrane-spanning stretches (helical) occupy residues 4-24 and 38-58; these read IGLF…ILSL and LGNL…VSLF. Position 147 (H147) interacts with Zn(2+). E148 is a catalytic residue. H151 contacts Zn(2+). A run of 2 helical transmembrane segments spans residues 155 to 175 and 200 to 220; these read GDMV…MFFA and FIIT…IVMW. E226 is a binding site for Zn(2+).

The protein belongs to the peptidase M48B family. The cofactor is Zn(2+).

Its subcellular location is the cell inner membrane. The chain is Protease HtpX from Acinetobacter baumannii (strain AB307-0294).